The sequence spans 284 residues: Phosphonates import ATP-binding protein PhnC 1 (284 aa).

In terms of domain architecture, ABC transporter spans 5–253; sequence IEVRGLSKSF…MLRDLYGSEA (249 aa). 38–45 contacts ATP; sequence GASGSGKS.

This sequence belongs to the ABC transporter superfamily. Phosphonates importer (TC 3.A.1.9.1) family. As to quaternary structure, the complex is composed of two ATP-binding proteins (PhnC), two transmembrane proteins (PhnE) and a solute-binding protein (PhnD).

It is found in the cell inner membrane. It carries out the reaction phosphonate(out) + ATP + H2O = phosphonate(in) + ADP + phosphate + H(+). Its function is as follows. Part of the ABC transporter complex PhnCDE involved in phosphonates import. Responsible for energy coupling to the transport system. This Cupriavidus metallidurans (strain ATCC 43123 / DSM 2839 / NBRC 102507 / CH34) (Ralstonia metallidurans) protein is Phosphonates import ATP-binding protein PhnC 1.